The sequence spans 81 residues: Photosystem I iron-sulfur center (81 aa).

2 consecutive 4Fe-4S ferredoxin-type domains span residues Ala2–Trp31 and Ile39–Tyr68. Residues Cys11, Cys14, Cys17, Cys21, Cys48, Cys51, Cys54, and Cys58 each contribute to the [4Fe-4S] cluster site.

In terms of assembly, the eukaryotic PSI reaction center is composed of at least 11 subunits. [4Fe-4S] cluster is required as a cofactor.

The protein localises to the plastid. Its subcellular location is the chloroplast thylakoid membrane. The catalysed reaction is reduced [plastocyanin] + hnu + oxidized [2Fe-2S]-[ferredoxin] = oxidized [plastocyanin] + reduced [2Fe-2S]-[ferredoxin]. Apoprotein for the two 4Fe-4S centers FA and FB of photosystem I (PSI); essential for photochemical activity. FB is the terminal electron acceptor of PSI, donating electrons to ferredoxin. The C-terminus interacts with PsaA/B/D and helps assemble the protein into the PSI complex. Required for binding of PsaD and PsaE to PSI. PSI is a plastocyanin-ferredoxin oxidoreductase, converting photonic excitation into a charge separation, which transfers an electron from the donor P700 chlorophyll pair to the spectroscopically characterized acceptors A0, A1, FX, FA and FB in turn. This chain is Photosystem I iron-sulfur center (psaC), found in Anthoceros angustus (Hornwort).